The chain runs to 118 residues: UPF0295 protein BCE_0593 (118 aa).

The next 2 membrane-spanning stretches (helical) occupy residues Ile12–Phe32 and Phe43–Met63.

Belongs to the UPF0295 family.

The protein localises to the cell membrane. In Bacillus cereus (strain ATCC 10987 / NRS 248), this protein is UPF0295 protein BCE_0593.